We begin with the raw amino-acid sequence, 72 residues long: MKNSESLKEFKKLNSAQITEKIDQLRKDLFDLRFKQATRQLNETHKFKTIKKQVAQLLTLSKSQSASQTTSE.

The protein belongs to the universal ribosomal protein uL29 family.

This is Large ribosomal subunit protein uL29 from Prochlorococcus marinus (strain MIT 9312).